The chain runs to 76 residues: DNA-directed RNA polymerase subunit epsilon (76 aa).

It belongs to the RNA polymerase subunit epsilon family. RNAP is composed of a core of 2 alpha, a beta and a beta' subunit. The core is associated with a delta subunit, and at least one of epsilon or omega. When a sigma factor is associated with the core the holoenzyme is formed, which can initiate transcription.

It carries out the reaction RNA(n) + a ribonucleoside 5'-triphosphate = RNA(n+1) + diphosphate. Its function is as follows. A non-essential component of RNA polymerase (RNAP). This Lactococcus lactis subsp. cremoris (strain MG1363) protein is DNA-directed RNA polymerase subunit epsilon.